The chain runs to 472 residues: Glutamate--tRNA ligase (472 aa).

The 'HIGH' region signature appears at 9 to 19 (PSPTGYLHVGG). Positions 98, 100, 125, and 127 each coordinate Zn(2+). Positions 237–241 (KLSKR) match the 'KMSKS' region motif. K240 contacts ATP.

This sequence belongs to the class-I aminoacyl-tRNA synthetase family. Glutamate--tRNA ligase type 1 subfamily. Monomer. The cofactor is Zn(2+).

It is found in the cytoplasm. The enzyme catalyses tRNA(Glu) + L-glutamate + ATP = L-glutamyl-tRNA(Glu) + AMP + diphosphate. Its function is as follows. Catalyzes the attachment of glutamate to tRNA(Glu) in a two-step reaction: glutamate is first activated by ATP to form Glu-AMP and then transferred to the acceptor end of tRNA(Glu). In Klebsiella pneumoniae (strain 342), this protein is Glutamate--tRNA ligase.